Here is a 223-residue protein sequence, read N- to C-terminus: Spore wall protein 26 (223 aa).

The signal sequence occupies residues M1–A16. Positions S207–S214 match the HBM motif.

The protein localises to the spore core. Its subcellular location is the spore wall. The protein resides in the spore. It is found in the perispore. Functionally, spore wall protein involved in the adhesion to host cells surface. Microsporidian spore adherence is an integral part of activation and host cell invasion which requires the extrusion at the spore apex of a very long and coiled structure, the polar tube, through which the sporoplasm is pushed to enter into the potential host cell. This is Spore wall protein 26 (SWP26) from Nosema bombycis (strain CQ1 / CVCC 102059) (Microsporidian parasite).